Consider the following 244-residue polypeptide: 1-(5-phosphoribosyl)-5-[(5-phosphoribosylamino)methylideneamino] imidazole-4-carboxamide isomerase (244 aa).

The active-site Proton acceptor is aspartate 8. Aspartate 130 (proton donor) is an active-site residue.

The protein belongs to the HisA/HisF family.

It is found in the cytoplasm. The enzyme catalyses 1-(5-phospho-beta-D-ribosyl)-5-[(5-phospho-beta-D-ribosylamino)methylideneamino]imidazole-4-carboxamide = 5-[(5-phospho-1-deoxy-D-ribulos-1-ylimino)methylamino]-1-(5-phospho-beta-D-ribosyl)imidazole-4-carboxamide. It participates in amino-acid biosynthesis; L-histidine biosynthesis; L-histidine from 5-phospho-alpha-D-ribose 1-diphosphate: step 4/9. The chain is 1-(5-phosphoribosyl)-5-[(5-phosphoribosylamino)methylideneamino] imidazole-4-carboxamide isomerase from Hahella chejuensis (strain KCTC 2396).